Reading from the N-terminus, the 731-residue chain is SUN domain-containing protein 2 (731 aa).

Disordered regions lie at residues 1–69 (MSRR…SHTS) and 106–142 (SGDL…FGSS). The LMNA-binding stretch occupies residues 1–128 (MSRRSQRLTR…GSESSKANGL (128 aa)). Residues 1–226 (MSRRSQRLTR…SRHFSLNLKS (226 aa)) are Nuclear-facing. Ser12 carries the phosphoserine modification. A compositionally biased stretch (low complexity) spans 18 to 33 (GGSSSSGASSVAGSQG). A phosphoserine mark is found at Ser39 and Ser55. Thr117 carries the phosphothreonine modification. 3 positions are modified to phosphoserine: Ser120, Ser123, and Ser147. Residues 227 to 247 (FLWFLLLLLLLTGLTYGAWHF) traverse the membrane as a helical segment. Residues 248 to 731 (YPLGLQTLQP…RFRVHGEPAH (484 aa)) lie on the Perinuclear space side of the membrane. 2 coiled-coil regions span residues 396–452 (QESE…VADE) and 486–519 (RSGL…KSAR). The sufficient for interaction with SYNE1 and SYNE2 stretch occupies residues 521 to 731 (AAASLGQILQ…RFRVHGEPAH (211 aa)). Residues 569–730 (GASVISTRCS…YRFRVHGEPA (162 aa)) enclose the SUN domain. N-linked (GlcNAc...) asparagine glycosylation is present at Asn650.

In terms of assembly, core component of the LINC complex which is composed of inner nuclear membrane SUN domain-containing proteins coupled to outer nuclear membrane KASH domain-containing nesprins. SUN and KASH domain-containing proteins seem to bind each other promiscuously; however, differentially expression of LINC complex constituents is giving rise to specific assemblies. At least SUN1/2-containing core LINC complexes are proposed to be hexameric composed of three protomers of each KASH and SUN domain-containing protein. Interacts with SYNE2; the SUN2:SYNE2/KASH2 LINC complex is a heterohexamer; the homotrimeric cloverleave-like conformation of the SUN domain is a prerequisite for LINC complex formation in which three separate SYNE2/KASH2 peptides bind at the interface of adjacent SUN domains. Component of a probable SUN2:KASH5 LINC complex. Interacts with SYNE1 and SYNE3; probably forming respective LINC complexes. Interacts with A-type lamin. Interaction with lamins B1 and C is hardly detectable. Interacts with EMD. Interacts with RAB5A. Interacts with TMEM43 and TMEM201. Interacts with IRAG2. In terms of processing, the disulfide bond with SYNE2 is required for stability of the SUN2:SYNE2/KASH2 LINC complex under tensile forces though not required for the interaction. The disulfide bond is proposed to be conserved in LINC complexes involved in force transmission. In terms of tissue distribution, highly expressed in heart, placenta and muscle.

The protein localises to the nucleus inner membrane. The protein resides in the nucleus envelope. It is found in the endosome membrane. In terms of biological role, as a component of the LINC (LInker of Nucleoskeleton and Cytoskeleton) complex, involved in the connection between the nuclear lamina and the cytoskeleton. The nucleocytoplasmic interactions established by the LINC complex play an important role in the transmission of mechanical forces across the nuclear envelope and in nuclear movement and positioning. Specifically, SYNE2 and SUN2 assemble in arrays of transmembrane actin-associated nuclear (TAN) lines which are bound to F-actin cables and couple the nucleus to retrograde actin flow during actin-dependent nuclear movement. Required for interkinetic nuclear migration (INM) and essential for nucleokinesis and centrosome-nucleus coupling during radial neuronal migration in the cerebral cortex and during glial migration. Required for nuclear migration in retinal photoreceptor progenitors implicating association with cytoplasmic dynein-dynactin and kinesin motor complexes, and probably B-type lamins; SUN1 and SUN2 seem to act redundantly. The SUN1/2:KASH5 LINC complex couples telomeres to microtubules during meiosis; SUN1 and SUN2 seem to act at least partial redundantly. Anchors chromosome movement in the prophase of meiosis and is involved in selective gene expression of coding and non-coding RNAs needed for gametogenesis. Required for telomere attachment to nuclear envelope and gametogenesis. May also function on endocytic vesicles as a receptor for Rab5-GDP and participate in the activation of Rab5. This Mus musculus (Mouse) protein is SUN domain-containing protein 2.